The chain runs to 423 residues: Anhydromevalonate phosphate decarboxylase (423 aa).

Asn-134 and Glu-197 together coordinate Mn(2+). Residue Asp-245 is the Proton acceptor of the active site.

This sequence belongs to the UbiD family. Requires prenylated FMN as cofactor. Mn(2+) serves as cofactor.

The enzyme catalyses (2E)-3-methyl-5-phosphooxypent-2-enoate + H(+) = isopentenyl phosphate + CO2. Its pathway is isoprenoid biosynthesis; isopentenyl diphosphate biosynthesis via mevalonate pathway. Its function is as follows. Catalyzes the conversion of trans-anhydromevalonate 5-phosphate (tAHMP) into isopentenyl phosphate. Involved in the archaeal mevalonate (MVA) pathway, which provides fundamental precursors for isoprenoid biosynthesis, such as isopentenyl diphosphate (IPP) and dimethylallyl diphosphate (DMAPP). This Methanothermobacter thermautotrophicus (strain ATCC 29096 / DSM 1053 / JCM 10044 / NBRC 100330 / Delta H) (Methanobacterium thermoautotrophicum) protein is Anhydromevalonate phosphate decarboxylase.